Reading from the N-terminus, the 1299-residue chain is DNA-directed RNA polymerase subunit beta' (1299 aa).

Cys-60, Cys-62, Cys-75, and Cys-78 together coordinate Zn(2+). The segment at 188–209 (GAKSDQKRRAKDGAEKEMGQTR) is disordered. Positions 535, 537, and 539 each coordinate Mg(2+). Residues Cys-882, Cys-959, Cys-966, and Cys-969 each coordinate Zn(2+).

This sequence belongs to the RNA polymerase beta' chain family. In terms of assembly, the RNAP catalytic core consists of 2 alpha, 1 beta, 1 beta' and 1 omega subunit. When a sigma factor is associated with the core the holoenzyme is formed, which can initiate transcription. Requires Mg(2+) as cofactor. It depends on Zn(2+) as a cofactor.

It carries out the reaction RNA(n) + a ribonucleoside 5'-triphosphate = RNA(n+1) + diphosphate. Functionally, DNA-dependent RNA polymerase catalyzes the transcription of DNA into RNA using the four ribonucleoside triphosphates as substrates. In Clavibacter sepedonicus (Clavibacter michiganensis subsp. sepedonicus), this protein is DNA-directed RNA polymerase subunit beta'.